Consider the following 404-residue polypeptide: Probable tRNA sulfurtransferase (404 aa).

The THUMP domain maps to 61–166; that stretch reads QTLVTGLPKI…HDATYMMAQV (106 aa). Residues 184–185, 209–210, R266, G288, and Q297 contribute to the ATP site; these read ML and HF.

The protein belongs to the ThiI family.

It is found in the cytoplasm. The enzyme catalyses [ThiI sulfur-carrier protein]-S-sulfanyl-L-cysteine + a uridine in tRNA + 2 reduced [2Fe-2S]-[ferredoxin] + ATP + H(+) = [ThiI sulfur-carrier protein]-L-cysteine + a 4-thiouridine in tRNA + 2 oxidized [2Fe-2S]-[ferredoxin] + AMP + diphosphate. It carries out the reaction [ThiS sulfur-carrier protein]-C-terminal Gly-Gly-AMP + S-sulfanyl-L-cysteinyl-[cysteine desulfurase] + AH2 = [ThiS sulfur-carrier protein]-C-terminal-Gly-aminoethanethioate + L-cysteinyl-[cysteine desulfurase] + A + AMP + 2 H(+). It participates in cofactor biosynthesis; thiamine diphosphate biosynthesis. Its function is as follows. Catalyzes the ATP-dependent transfer of a sulfur to tRNA to produce 4-thiouridine in position 8 of tRNAs, which functions as a near-UV photosensor. Also catalyzes the transfer of sulfur to the sulfur carrier protein ThiS, forming ThiS-thiocarboxylate. This is a step in the synthesis of thiazole, in the thiamine biosynthesis pathway. The sulfur is donated as persulfide by IscS. The sequence is that of Probable tRNA sulfurtransferase from Lysinibacillus sphaericus (strain C3-41).